A 241-amino-acid chain; its full sequence is dTTP/UTP pyrophosphatase (241 aa).

Ser38 is subject to Phosphoserine. Residue Asp105 is the Proton acceptor of the active site.

The protein belongs to the Maf family. YhdE subfamily. It depends on a divalent metal cation as a cofactor.

The protein resides in the cytoplasm. The protein localises to the nucleus. The catalysed reaction is dTTP + H2O = dTMP + diphosphate + H(+). It catalyses the reaction UTP + H2O = UMP + diphosphate + H(+). In terms of biological role, nucleoside triphosphate pyrophosphatase that hydrolyzes dTTP and UTP. May have a dual role in cell division arrest and in preventing the incorporation of modified nucleotides into cellular nucleic acids. In Schizosaccharomyces pombe (strain 972 / ATCC 24843) (Fission yeast), this protein is dTTP/UTP pyrophosphatase.